The sequence spans 151 residues: MVVNKQGSVKSIKRKARKSKKVVSGRAKEFTYKGYSLEDLQKMSMEELIKILPARARRTLLREPNYEQKKLMEKLESDEEDVKTHVRDVIILPNYVGKIVEVYNGNSYFKFEIKPEMIGHYLGEFVMTRKEVKHSGPGVGATRSSKFMPLK.

This sequence belongs to the universal ribosomal protein uS19 family.

In terms of biological role, protein S19 forms a complex with S13 that binds strongly to the 16S ribosomal RNA. The sequence is that of Small ribosomal subunit protein uS19 (rps19) from Thermoplasma acidophilum (strain ATCC 25905 / DSM 1728 / JCM 9062 / NBRC 15155 / AMRC-C165).